A 62-amino-acid chain; its full sequence is Cytotoxin 7 (62 aa).

The signal sequence occupies residues 1–2 (YT). Disulfide bonds link Cys-5–Cys-23, Cys-16–Cys-40, Cys-44–Cys-55, and Cys-56–Cys-61.

Belongs to the three-finger toxin family. Short-chain subfamily. Type IA cytotoxin sub-subfamily. Monomer in solution; Homodimer and oligomer in the presence of negatively charged lipids forming a pore with a size ranging between 20 and 30 Angstroms. Expressed by the venom gland.

It localises to the secreted. The protein localises to the target cell membrane. Shows cytolytic activity on many different cells by forming pore in lipid membranes. In vivo, increases heart rate or kills the animal by cardiac arrest. In addition, it binds to heparin with high affinity, interacts with Kv channel-interacting protein 1 (KCNIP1) in a calcium-independent manner, and binds to integrin alpha-V/beta-3 (ITGAV/ITGB3) with moderate affinity. This chain is Cytotoxin 7, found in Naja sputatrix (Malayan spitting cobra).